The sequence spans 1219 residues: FK506-binding protein 15 (1219 aa).

Met-1 carries the post-translational modification N-acetylmethionine. 2 positions are modified to phosphoserine: Ser-14 and Ser-23. The disordered stretch occupies residues 41–66 (YTAPKQPKKGQGTAATGNQATPKTAP). Residues 53–66 (TAATGNQATPKTAP) are compositionally biased toward polar residues. The tract at residues 72–169 (PTILVATAVH…AVEFNKQVCI (98 aa)) is important for function in growth cone organization. N6-acetyllysine is present on Lys-92. A PPIase FKBP-type domain is found at 197–290 (GDSLEVAYTG…VFEVEVRRVK (94 aa)). Residues 294-349 (DSGSDGHSVSSRDSAAPSPIPGADNLSADPVVSPPTSIPFKSGEPALRTKSNSLSE) are disordered. Residues Ser-307, Ser-311, Ser-326, Ser-344, Ser-346, and Ser-356 each carry the phosphoserine modification. The tract at residues 381–433 (PQLDSNDSEIEDVNTLQGGGQPVVTPSVQPSLHPAHPALPQMTSQAPQPSVTG) is disordered. A compositionally biased stretch (polar residues) spans 421 to 433 (QMTSQAPQPSVTG). 3 coiled-coil regions span residues 522-789 (AVSK…TDQA), 818-878 (DEHL…GVEA), and 925-951 (TLQL…AEER). Ser-619 bears the Phosphoserine mark. Residues 739 to 761 (LEKNLSERKKKSAQERSQAEEEI) form a disordered region. The segment at 931-1219 (QQEQEKEESS…DDDDDIDWLG (289 aa)) is disordered. Phosphoserine occurs at positions 939, 940, 941, and 956. Over residues 957 to 971 (QEQSASASSGQPQAP) the composition is skewed to low complexity. A phosphoserine mark is found at Ser-979, Ser-1024, Ser-1056, Ser-1061, Ser-1065, and Ser-1097. A compositionally biased stretch (polar residues) spans 1090 to 1100 (QESSTRLSLTS). Thr-1099 bears the Phosphothreonine mark. Ser-1114 carries the phosphoserine modification. The segment covering 1123 to 1139 (LKKDDVTSSTGPHKELS) has biased composition (basic and acidic residues). 5 positions are modified to phosphoserine: Ser-1158, Ser-1161, Ser-1162, Ser-1164, and Ser-1195. Thr-1203 carries the phosphothreonine modification. Positions 1207 to 1219 (GDDDDDDDIDWLG) are enriched in acidic residues.

It belongs to the FKBP-type PPIase family. As to quaternary structure, interacts with WIP and actin. Interacts with TBC1D23.

Its subcellular location is the cytoplasm. The protein resides in the cell projection. It is found in the axon. The protein localises to the early endosome. Functionally, may be involved in the cytoskeletal organization of neuronal growth cones. Seems to be inactive as a PPIase. Involved in the transport of early endosomes at the level of transition between microfilament-based and microtubule-based movement. This chain is FK506-binding protein 15 (FKBP15), found in Homo sapiens (Human).